The primary structure comprises 46 residues: Esculentin-1HSa (46 aa).

A disulfide bond links Cys40 and Cys46.

Expressed by the skin glands.

It is found in the secreted. Functionally, has antibacterial activity against the Gram-positive bacterium S.aureus ATCC 25923 (MIC=12 uM) and the Gram-negative bacterium E.coli ATCC 25726 (MIC=12 uM). The protein is Esculentin-1HSa of Odorrana hosii (Hose's rock frog).